We begin with the raw amino-acid sequence, 367 residues long: 3-dehydroquinate synthase (367 aa).

NAD(+)-binding positions include 69–74 (DGEAFK), 103–107 (GVIGD), 127–128 (TT), K140, and K149. Positions 182, 245, and 262 each coordinate Zn(2+).

This sequence belongs to the sugar phosphate cyclases superfamily. Dehydroquinate synthase family. It depends on Co(2+) as a cofactor. Requires Zn(2+) as cofactor. NAD(+) is required as a cofactor.

Its subcellular location is the cytoplasm. The catalysed reaction is 7-phospho-2-dehydro-3-deoxy-D-arabino-heptonate = 3-dehydroquinate + phosphate. It participates in metabolic intermediate biosynthesis; chorismate biosynthesis; chorismate from D-erythrose 4-phosphate and phosphoenolpyruvate: step 2/7. Catalyzes the conversion of 3-deoxy-D-arabino-heptulosonate 7-phosphate (DAHP) to dehydroquinate (DHQ). This chain is 3-dehydroquinate synthase, found in Ectopseudomonas mendocina (strain ymp) (Pseudomonas mendocina).